The primary structure comprises 1096 residues: MAPGRVYPPSDKPIALLDLLHFHLVHNPYFPIYIFPNDDDTLTEISFLEFTRAVHRVAHIVRPNRSGQDGEIVALIANTDTLLYHAIGAGMILADIVPFYMSPRNSTPAVASMLQKTACNRIFTIPSVHESLISGLDGLGGPALQFQTIPTLAQVFPNLGKEKSHYPFEPYPEAAITPALDAVFLYLHSSGSTGYPKPIPLTNRCQLHWLQQPGILGYRHYLPDLCLGFAALPPFHSLGNCMQLYTPLISVITVALYAPTSFHDPTAPPVIPTSENILDNLRKTGANCIIVVPSFLEQWAWDEKAVETLKNMSLVLYGGGPLSSKVGDALCAAGVSLAVQYGTTEFGAPTQLPDKVQLENGLWEWMRFGLSVLIRWVHQGDETYECQLLTTEKYQMAVENMSDVKGYATSDLFVKHPTHEGLWKIIGRTDDVLTLASGEKTVPAMMEGIISSSAHVNGVIMFGRGRNQVGVLVEPRSAHVDLADNKAIEEFRNRIWYEVDEANKNAPTFSRIFKEMILITSPDKPMFRVGKGTTSKNATLKAYEEEIDALYRTVEASTKIGNSTAPPSEWTVSTLEHWLNEQATELALGTIVVPNIDLFAQGFDSLSATFLRNRIIGAMRSFPDLQLRAAARRIPHNLVFECPNIKLLADRVAKIAGQPQSQVNEQVKGSALHDAKMEIETMLGKYSAELRRTKKTNGSHVESSASTKAGRTVVLLTGSTGGLGSYLLASLLKNEEVAKVYALNRHSKASRVQQRQTAVFEDRELDVALLKLDKLIFIEADATAERCGLNEQTYDQLRQSVTVIIHSAWRVDFNLPLSSFEPNVRGTFQLVDLALSSTLHSTPRFLFISSVGSAQGWDRSRGAFPEDVQLDASVAVGSGYGASKYIAERLVTSSGLNATSLRLGQIAGGPNGAWTLSDWFPILVKSSLALGKFPNIQAYVSWMPAEKVSAAILDVALAKHAPPPALNIVHPHPVSWPDVLKPVRDAVVAKKRLPKESLPFVRMSEWVALLEMRAEEATESDINAIPAIKLLDWFRALAGVDEDLQRTGRTDVEVGGIVKMVTEKAQSISATLSGLSQIGQADAKLWVDYWIARGLF.

The tract at residues 39–352 is adenylation (A) domain; sequence DDTLTEISFL…TTEFGAPTQL (314 aa). Residues His236, 339 to 340, Thr344, and 425 to 428 contribute to the AMP site; these read VQ and IIGR. Residues 569–656 form the Carrier domain; it reads EWTVSTLEHW…LLADRVAKIA (88 aa). An O-(pantetheine 4'-phosphoryl)serine modification is found at Ser605. Positions 716–952 are reductase (R) domain; sequence LTGSTGGLGS…MPAEKVSAAI (237 aa). Residues 720–723, 807–809, Tyr880, and Lys884 each bind NADP(+); these read TGGL and SAW.

It belongs to the adenylate-forming reductase family.

Functionally, adenylate-forming reductase, a natural product biosynthesis enzyme that resembles non-ribosomal peptide synthetases, yet serves to modify one substrate, rather than to condense two or more building blocks. The A-domain preferentially accepts L-threonine as substrate. The natural product of the enzyme is not yet known. This is Adenylate-forming reductase Nps9 from Serpula lacrymans var. lacrymans (strain S7.9) (Dry rot fungus).